The chain runs to 1117 residues: MADGPRCKRRKQANPRRNNVTNYNTVVEANSDSDDEDKLHIVEEESITDAADCEGGMPDDELPADQTVLPGGSDRGGGAKNCWQDNVKDNECDSDAENEQNHDPNVEEFLQQQDTAVIYPEAPEEDQRQGTPEASSHDENGTPDAFSQLLTCPYCDRGYKRFTSLKEHIKYRHEKNEDNFSCSLCSYTFAYRTQLERHMTSHKSGREQRHVTQSGGNRKFKCTECGKAFKYKHHLKEHLRIHSGEKPYECPNCKKRFSHSGSYSSHISSKKCISLMPVNGRPRSGLKTSQCSSPSLSTSPGSPTRPQIRQKIENKPLQEPLSVNQIKTEPVDYEFKPIVVASGINCSTPLQNGVFSSGGQLQATSSPQGVVQAVVLPTVGLVSPISINLSDIQNVLKVAVDGNVIRQVLETNQASLASKEQEAVSASPIQQGGHSVISAISLPLVDQDGTTKIIINYSLEQPSQLQVVPQNLKKEIPAPTNSCKSEKLPEDLTVKSETDKSFEGARDDSTCLLCEDCPGDLNALPELKHYDPECPAQPPPPAPATEKPESSASSAGNGDLSPSQPPLKNLLSLLKAYYALNAQPSTEELSKIADSVNLPLDGVKKWFEKMQAGQIPGQSPDPPSPGTGSVNIPTKTDEQPQPADGNEPQEDSTRGQSPVKIRSSPVLPVGSAMNGSRSCTSSPSPLNLCSARNPQGYSCVAEGAQEEPQVEPLDLSLPKQQGELLERSTVSSVYQNSVYSVQEEPLNLSCAKKEPQKDSCVTDSEPVVNVVPPSANPINIAIPTVTAQLPTIVAIADQNSVPCLRALAANKQTILIPQVAYTYSATVSPAVQEPPVKVIQPNGNQDERQDTSSEGVSTVEDQNDSDSTPPKKKTRKTENGMYACDLCDKIFQKSSSLLRHKYEHTGKRPHECGICRKAFKHKHHLIEHMRLHSGEKPYQCDKCGKRFSHSGSYSQHMNHRYSYCKRGAEDRDAMEQEDAGPEVLPEVLATEHVGARASPSQADSDERESLTREEDEDSEKEEEEEDKEMEELQEGKECENPQGEEEEEEEEEEEEEEEEEEEVEADEAEHEAAAKTDGTVEVGAAQQAGSLEQKASESEMESESESEQLSEEKTNEA.

Disordered regions lie at residues 1 to 103 (MADG…QNHD) and 122 to 143 (APEEDQRQGTPEASSHDENGTP). The span at 15-30 (PRRNNVTNYNTVVEAN) shows a compositional bias: low complexity. Ser-31 and Ser-33 each carry phosphoserine. The C2H2-type 1 zinc finger occupies 150–173 (LTCPYCDRGYKRFTSLKEHIKYRH). Residues Lys-166 and Lys-175 each participate in a glycyl lysine isopeptide (Lys-Gly) (interchain with G-Cter in SUMO2) cross-link. 2 C2H2-type zinc fingers span residues 180 to 202 (FSCSLCSYTFAYRTQLERHMTSH) and 220 to 242 (FKCTECGKAFKYKHHLKEHLRIH). The C2H2-type 4; atypical zinc-finger motif lies at 248–272 (YECPNCKKRFSHSGSYSSHISSKKC). Positions 278-307 (VNGRPRSGLKTSQCSSPSLSTSPGSPTRPQ) are disordered. A Glycyl lysine isopeptide (Lys-Gly) (interchain with G-Cter in SUMO2) cross-link involves residue Lys-287. Residues 288–304 (TSQCSSPSLSTSPGSPT) show a composition bias toward low complexity. A phosphoserine mark is found at Ser-293 and Ser-302. Residues Lys-311 and Lys-315 each participate in a glycyl lysine isopeptide (Lys-Gly) (interchain with G-Cter in SUMO2) cross-link. Lys-327 is covalently cross-linked (Glycyl lysine isopeptide (Lys-Gly) (interchain with G-Cter in SUMO); alternate). Lys-327 is covalently cross-linked (Glycyl lysine isopeptide (Lys-Gly) (interchain with G-Cter in SUMO2); alternate). Residues Lys-419, Lys-473, Lys-484, Lys-495, and Lys-528 each participate in a glycyl lysine isopeptide (Lys-Gly) (interchain with G-Cter in SUMO2) cross-link. Disordered stretches follow at residues 476-501 (IPAPTNSCKSEKLPEDLTVKSETDKS), 528-566 (KHYDPECPAQPPPPAPATEKPESSASSAGNGDLSPSQPP), and 613-687 (GQIP…SPLN). A compositionally biased stretch (basic and acidic residues) spans 484–501 (KSEKLPEDLTVKSETDKS). Positions 559–618 (DLSPSQPPLKNLLSLLKAYYALNAQPSTEELSKIADSVNLPLDGVKKWFEKMQAGQIPGQ) form a DNA-binding region, homeobox; atypical. 4 positions are modified to phosphoserine: Ser-657, Ser-664, Ser-671, and Ser-678. Polar residues predominate over residues 673–687 (MNGSRSCTSSPSPLN). Phosphothreonine is present on Thr-680. Residue Ser-682 is modified to Phosphoserine. A Glycyl lysine isopeptide (Lys-Gly) (interchain with G-Cter in SUMO); alternate cross-link involves residue Lys-752. Residue Lys-752 forms a Glycyl lysine isopeptide (Lys-Gly) (interchain with G-Cter in SUMO2); alternate linkage. Positions 834–876 (PPVKVIQPNGNQDERQDTSSEGVSTVEDQNDSDSTPPKKKTRK) are disordered. Over residues 852-868 (SSEGVSTVEDQNDSDST) the composition is skewed to polar residues. 2 C2H2-type zinc fingers span residues 882 to 904 (YACDLCDKIFQKSSSLLRHKYEH) and 910 to 932 (HECGICRKAFKHKHHLIEHMRLH). A C2H2-type 7; atypical zinc finger spans residues 938 to 959 (YQCDKCGKRFSHSGSYSQHMNH). The interval 991–1117 (EHVGARASPS…QLSEEKTNEA (127 aa)) is disordered. Acidic residues-rich tracts occupy residues 1013 to 1032 (EEDEDSEKEEEEEDKEMEEL), 1042 to 1069 (QGEEEEEEEEEEEEEEEEEEEVEADEAE), and 1098 to 1109 (SEMESESESEQL).

Belongs to the delta-EF1/ZFH-1 C2H2-type zinc-finger family. In terms of assembly, interacts (via N-terminus) with SMARCA4/BRG1. Post-translationally, ubiquitinated, leading to degradation in a proteasome-dependent manner. Deubiquitinated by USP51, leading to stabilization. As to expression, expressed in the external germinal layer (EGL) and internal granular layer (IGL) of the cerebellum (at protein level).

It localises to the nucleus. Functionally, acts as a transcriptional repressor. Binds to E-box sequences in the immunoglobulin heavy chain enhancer as well as in the regulatory regions of many other tissue-specific genes. Represses E-cadherin promoter and induces an epithelial-mesenchymal transition (EMT) by recruiting SMARCA4/BRG1. Represses BCL6 transcription in the presence of the corepressor CTBP1. Positively regulates neuronal differentiation. Represses RCOR1 transcription activation during neurogenesis. Represses transcription by binding to the E box (5'-CANNTG-3'). In the absence of TGFB1, acts as a repressor of COL1A2 transcription via binding to the E-box in the upstream enhancer region. Promotes tumorigenicity by repressing stemness-inhibiting microRNAs. This is Zinc finger E-box-binding homeobox 1 from Mus musculus (Mouse).